The chain runs to 102 residues: Integration host factor subunit alpha (102 aa).

This sequence belongs to the bacterial histone-like protein family. As to quaternary structure, heterodimer of an alpha and a beta chain.

Functionally, this protein is one of the two subunits of integration host factor, a specific DNA-binding protein that functions in genetic recombination as well as in transcriptional and translational control. The chain is Integration host factor subunit alpha from Paracoccus denitrificans (strain Pd 1222).